The sequence spans 1511 residues: Pleiotropic ABC efflux transporter of multiple drugs (1511 aa).

Residues 1–14 show a composition bias toward polar residues; that stretch reads MPEAKLNNNVNDVT. The interval 1 to 32 is disordered; the sequence is MPEAKLNNNVNDVTSYSSASSSTENAADLHNY. Over 1-517 the chain is Cytoplasmic; sequence MPEAKLNNNV…LLIRNMWRLR (517 aa). S22 carries the phosphoserine modification. T49 and T51 each carry phosphothreonine. A disordered region spans residues 52–71; it reads AQSMQNSTQSAPNKSDAQSI. 3 positions are modified to phosphoserine: S54, S58, and S61. Residues 161–410 form the ABC transporter 1 domain; the sequence is LRKFQRSKET…FEDMGYVCPS (250 aa). Residues 518–542 form a helical membrane-spanning segment; sequence NNIGFTLFMILGNCSMALILGSMFF. Topologically, residues 543-558 are extracellular; sequence KIMKKGDTSTFYFRGS. The chain crosses the membrane as a helical span at residues 559–579; the sequence is AMFFAILFNAFSSLLEIFSLY. At 580-611 the chain is on the cytoplasmic side; the sequence is EARPITEKHRTYSLYHPSADAFASVLSEIPSK. A helical transmembrane segment spans residues 612–628; sequence LIIAVCFNIIFYFLVDF. The Extracellular segment spans residues 629 to 631; sequence RRN. A helical membrane pass occupies residues 632–650; the sequence is GGVFFFYLLINIVAVFSMS. Residues 651–665 are Cytoplasmic-facing; the sequence is HLFRCVGSLTKTLSE. The chain crosses the membrane as a helical span at residues 666–685; the sequence is AMVPASMLLLALSMYTGFAI. Over 686 to 774 the chain is Extracellular; it reads PKKKILRWSK…QYYHKDKWRG (89 aa). Residue N734 is glycosylated (N-linked (GlcNAc...) asparagine). A helical membrane pass occupies residues 775-793; the sequence is FGIGMAYVVFFFFVYLFLC. Over 794–1237 the chain is Cytoplasmic; that stretch reads EYNEGAKQKG…GTSLQGLQNQ (444 aa). Residues 824–858 form a disordered region; that stretch reads EKNANDPENVGERSDLSSDRKMLQESSEEESDTYG. K825 participates in a covalent cross-link: Glycyl lysine isopeptide (Lys-Gly) (interchain with G-Cter in ubiquitin). Residues 833–846 are compositionally biased toward basic and acidic residues; it reads VGERSDLSSDRKML. Phosphoserine is present on residues S837, S840, S841, S849, S850, and S854. Residues 869 to 1112 form the ABC transporter 2 domain; that stretch reads FHWRNLCYEV…MIDYFESHGA (244 aa). Residue 905-912 participates in ATP binding; that stretch reads GASGAGKT. The chain crosses the membrane as a helical span at residues 1238–1260; sequence MLAVFMFTVIFNPILQQYLPSFV. The Extracellular segment spans residues 1261-1291; sequence QQRDLYEARERPSRTFSWISFIFAQIFVEVP. A helical transmembrane segment spans residues 1292 to 1313; the sequence is WNILAGTIAYFIYYYPIGFYSN. The Cytoplasmic portion of the chain corresponds to 1314-1324; sequence ASAAGQLHERG. The helical transmembrane segment at 1325-1349 threads the bilayer; the sequence is ALFWLFSCAFYVYVGSMGLLVISFN. The Extracellular segment spans residues 1350–1354; that stretch reads QVAES. The helical transmembrane segment at 1355–1379 threads the bilayer; the sequence is AANLASLLFTMSLSFCGVMTTPSAM. Topologically, residues 1380-1388 are cytoplasmic; the sequence is PRFWIFMYR. A helical transmembrane segment spans residues 1389–1407; sequence VSPLTYFIQALLAVGVANV. Residues 1408-1476 are Extracellular-facing; that stretch reads DVKCADYELL…VNSFYSERWR (69 aa). The N-linked (GlcNAc...) asparagine glycan is linked to N1447. A helical membrane pass occupies residues 1477–1499; that stretch reads NYGIFICYIAFNYIAGVFFYWLA. Residues 1500-1511 lie on the Cytoplasmic side of the membrane; it reads RVPKKNGKLSKK.

It belongs to the ABC transporter superfamily. ABCG family. PDR (TC 3.A.1.205) subfamily. Ubiquitinylation mediates endocytosis and vacuolar degradation. Phosphorylation by casein kinase I stabilizes the protein half-life.

It is found in the cell membrane. Its activity is regulated as follows. FK506, isonitrile, enniatin, RU49953, kitasatospora E420, staurosporine CGP42700, prenyl-flavonoids, D-octapeptides were found to be inhibitors in vivo. Vanadate and oligomycin were found to be inhibitors in vitro. Its function is as follows. Active efflux of weakly charged organic compounds of 90 cubic Angstroms to 300 cubic Angstroms surface volume. Confers resistance to numerous chemicals including cycloheximide, sulfomethuron methyl, steroids, antiseptics, antibiotics, anticancer, herbicides, mycotoxins, insecticides, ionophores, alkaloids, flavonoids, phenothiazines, organotin compounds, carbazoles, lysosomotropic aminoesters, detergents, rhodamines and other fluorophores, azoles and other antifungals. Exhibits nucleoside triphosphatase activity. The sequence is that of Pleiotropic ABC efflux transporter of multiple drugs (PDR5) from Saccharomyces cerevisiae (strain ATCC 204508 / S288c) (Baker's yeast).